The following is a 306-amino-acid chain: Ribonuclease Z (306 aa).

Zn(2+) contacts are provided by H63, H65, D67, H68, H141, D211, and H269. D67 acts as the Proton acceptor in catalysis.

This sequence belongs to the RNase Z family. Homodimer. Zn(2+) serves as cofactor.

The enzyme catalyses Endonucleolytic cleavage of RNA, removing extra 3' nucleotides from tRNA precursor, generating 3' termini of tRNAs. A 3'-hydroxy group is left at the tRNA terminus and a 5'-phosphoryl group is left at the trailer molecule.. Zinc phosphodiesterase, which displays some tRNA 3'-processing endonuclease activity. Probably involved in tRNA maturation, by removing a 3'-trailer from precursor tRNA. This chain is Ribonuclease Z, found in Macrococcus caseolyticus (strain JCSC5402) (Macrococcoides caseolyticum).